The chain runs to 521 residues: UDP-N-acetylmuramoyl-L-alanyl-D-glutamate--2,6-diaminopimelate ligase (521 aa).

UDP-N-acetyl-alpha-D-muramoyl-L-alanyl-D-glutamate is bound at residue Ser-33. 116–122 contacts ATP; sequence GTNGKTT. Residues 158–159, Ser-185, Gln-191, and Arg-193 contribute to the UDP-N-acetyl-alpha-D-muramoyl-L-alanyl-D-glutamate site; that span reads TT. An N6-carboxylysine modification is found at Lys-225. Residues Arg-409, 433–436, Gly-483, and Glu-487 each bind meso-2,6-diaminopimelate; that span reads DNPR. The Meso-diaminopimelate recognition motif motif lies at 433 to 436; the sequence is DNPR.

The protein belongs to the MurCDEF family. MurE subfamily. Mg(2+) is required as a cofactor. Carboxylation is probably crucial for Mg(2+) binding and, consequently, for the gamma-phosphate positioning of ATP.

It is found in the cytoplasm. It carries out the reaction UDP-N-acetyl-alpha-D-muramoyl-L-alanyl-D-glutamate + meso-2,6-diaminopimelate + ATP = UDP-N-acetyl-alpha-D-muramoyl-L-alanyl-gamma-D-glutamyl-meso-2,6-diaminopimelate + ADP + phosphate + H(+). Its pathway is cell wall biogenesis; peptidoglycan biosynthesis. Catalyzes the addition of meso-diaminopimelic acid to the nucleotide precursor UDP-N-acetylmuramoyl-L-alanyl-D-glutamate (UMAG) in the biosynthesis of bacterial cell-wall peptidoglycan. In Nitrosomonas europaea (strain ATCC 19718 / CIP 103999 / KCTC 2705 / NBRC 14298), this protein is UDP-N-acetylmuramoyl-L-alanyl-D-glutamate--2,6-diaminopimelate ligase.